Reading from the N-terminus, the 381-residue chain is Early boundary activity protein 2 (381 aa).

Positions 210 to 245 are disordered; sequence NDAEDVPAPPSKRPRHMSTSSSESHIPDTASEKDEK. A BEN domain is found at 268–365; it reads PNGTQITAHQ…TKCADTAKKY (98 aa).

The heterotrimeric Elba complex consists of Elba1, Elba2 and Elba3.

The protein localises to the nucleus. The heterotrimeric Elba complex is required for chromatin domain boundary function during early embryogenesis. It binds to a 8-bp sequence 5'-CCAATAAG-3' in the Fab-7 insulator or boundary element in the bithorax complex and contributes to its insulator or boundary activity. Elba2 can act as a transcriptional repressor and binds the palindromic sequence 5'-CCAATTGG-3' to mediate transcriptional repression. The polypeptide is Early boundary activity protein 2 (Drosophila melanogaster (Fruit fly)).